Here is a 251-residue protein sequence, read N- to C-terminus: Probable transcriptional regulatory protein BLD_0450 (251 aa).

It belongs to the TACO1 family.

The protein localises to the cytoplasm. This chain is Probable transcriptional regulatory protein BLD_0450, found in Bifidobacterium longum (strain DJO10A).